A 193-amino-acid polypeptide reads, in one-letter code: MTDYLLLFVGTVLVNNFVLVKFLGLCPFMGVSKKLETAIGMGFATTFVMTIASISSWLMDTFILVPLDLLYLRTLSFILVIAVVVQFTEMVVRKTSPTLYRLLGIFLPLITTNCAVLGVALLNINQSHTFMQSAVYGFGAAVGFSLVMVLFAAIRERLAVANIPAPFKGSSIGLITAGLMSLAFMGFSGLVKL.

The next 6 helical transmembrane spans lie at L5 to L25, I39 to M59, F62 to A82, L102 to L122, A134 to I154, and S171 to V191.

It belongs to the NqrDE/RnfAE family. In terms of assembly, the complex is composed of six subunits: RnfA, RnfB, RnfC, RnfD, RnfE and RnfG.

The protein localises to the cell inner membrane. Functionally, part of a membrane-bound complex that couples electron transfer with translocation of ions across the membrane. The sequence is that of Ion-translocating oxidoreductase complex subunit A from Proteus mirabilis (strain HI4320).